A 333-amino-acid chain; its full sequence is MNKLTTIESHFLQLQKRYPEINSEVTDLLNDVAFAAKLVRREVVRAGLADILGLAGSTNVQGEEVKKLDLFANERLINAIGQHGRFAIMGSEENEEIIKPPKFESGEYVLLFDPLDGSSNIDVNVSVGTIFSIYRLKSGEPSQASLEDCLQKGADQIAAGYVIYGSSVMMVYTTGHGVHGFTYDQTVGEFLLSHENITTPEHGKYYSVNEGSWQEFNDGTKRFLDYLKEEDKATGRPYSTRYIGSFVADFHRNLLTGGVFVYPATKKHKNGKLRLMYEANPMAFICEQAGGRATDGYRRILDIEPKELHQRTPLYIGSKNDVLIAEEFEQGKR.

Mg(2+)-binding residues include Glu-92, Asp-113, Leu-115, and Asp-116. Substrate is bound by residues 116–119 (DGSS), Asn-209, Tyr-242, and Lys-272. A Mg(2+)-binding site is contributed by Glu-278.

This sequence belongs to the FBPase class 1 family. In terms of assembly, homotetramer. The cofactor is Mg(2+).

The protein localises to the cytoplasm. The enzyme catalyses beta-D-fructose 1,6-bisphosphate + H2O = beta-D-fructose 6-phosphate + phosphate. It participates in carbohydrate biosynthesis; Calvin cycle. This Chlorobaculum tepidum (strain ATCC 49652 / DSM 12025 / NBRC 103806 / TLS) (Chlorobium tepidum) protein is Fructose-1,6-bisphosphatase class 1.